Reading from the N-terminus, the 68-residue chain is Large ribosomal subunit protein uL29 (68 aa).

It belongs to the universal ribosomal protein uL29 family.

This Thermoplasma acidophilum (strain ATCC 25905 / DSM 1728 / JCM 9062 / NBRC 15155 / AMRC-C165) protein is Large ribosomal subunit protein uL29 (rpl29).